The primary structure comprises 35 residues: Natriuretic peptide TNPb (35 aa).

Cysteine 9 and cysteine 25 form a disulfide bridge.

Expressed by the venom gland.

It localises to the secreted. Functionally, snake venom natriuretic peptide that exhibits vasoactive and probable hypotensive activity. Is only weakly active on natriuretic peptide receptor-C (NPR3). Stimulates cGMP production through the natriuretic peptide receptor 1 (NPR1) with moderate potencies for the rat NPR1 (EC(50)=1200 nM), and very weak potencies over human NPR1 (30% activation at 10 uM). In vivo, does not impact systolic and diastolic blood pressure, as well as heart rate, when intravenously injected in conscious rabbits. Does not affect the bradycardia due to cardiac afferent stimulation (Bezold-Jarisch reflex). The sequence is that of Natriuretic peptide TNPb from Oxyuranus microlepidotus (Inland taipan).